We begin with the raw amino-acid sequence, 1068 residues long: Protein AF-10 (1068 aa).

A PHD-type 1 zinc finger spans residues 22–74 (IGGCCVCSDERGWAENPLVYCDGHGCSVAVHQACYGIVQVPTGPWFCRKCESQ). The C2HC pre-PHD-type zinc-finger motif lies at 79-112 (RVRCELCPHKDGALKRTDNGGWAHVVCALYIPEV). The interval 106–190 (ALYIPEVQFA…EGNGADNVQY (85 aa)) is required for interaction with histone H3. The PHD-type 2 zinc finger occupies 135-198 (KTCYICDEQG…QYCGYCKYHF (64 aa)). The tract at residues 207 to 260 (GSNRSYEQSLSDSSSHSQDKHHEKEKKKYKEKDKHKQKHKKQPEPSPALVPSLT) is disordered. Ser-217 carries the post-translational modification Phosphoserine. Residues 223 to 240 (SQDKHHEKEKKKYKEKDK) are compositionally biased toward basic and acidic residues. Ser-252 carries the phosphoserine modification. A Glycyl lysine isopeptide (Lys-Gly) (interchain with G-Cter in SUMO2) cross-link involves residue Lys-280. The span at 296-305 (EVSAHTSSGK) shows a compositional bias: polar residues. Disordered regions lie at residues 296–416 (EVSA…SFSS) and 428–506 (SQPK…SVAS). Residues 306–317 (DVSEARGSEGKG) are compositionally biased toward basic and acidic residues. Residues 340–351 (TAVSASSPFPQG) show a composition bias toward polar residues. The span at 352 to 372 (SFSGTPGSVKSSSGSSVQSPQ) shows a compositional bias: low complexity. Composition is skewed to polar residues over residues 387–396 (YTHTQQPSST), 404–416 (SGSQ…SFSS), and 428–446 (SQPK…SSLP). Position 436 is a phosphoserine (Ser-436). A compositionally biased stretch (basic residues) spans 465 to 483 (EKKRKGNKQSKHGPGRPKG). Positions 490-506 (VSHLSVSSASPTSSVAS) are enriched in low complexity. Ser-532 carries the post-translational modification Phosphoserine. The span at 583 to 594 (SGSGSSTPVSSS) shows a compositional bias: low complexity. 2 disordered regions span residues 583-613 (SGSG…LSPS) and 660-698 (SESS…NLQL). Residues 595 to 604 (HIPQQSSGHL) are compositionally biased toward polar residues. The span at 681 to 692 (SSPRGSLSPRSP) shows a compositional bias: low complexity. A phosphoserine mark is found at Ser-686, Ser-688, and Ser-691. The interval 752-780 (LQVENRRLEEQIKNLTAKKERLQLLNAQL) is leucine-zipper. Disordered regions lie at residues 786–869 (AITT…VSGV) and 1040–1068 (PFLT…QEKS). The segment covering 787–816 (ITTNPSPSHQMHTYTAQTAPPPDSLNSSKS) has biased composition (polar residues). 2 stretches are compositionally biased toward low complexity: residues 836–850 (LTSS…SALS) and 857–869 (QSPA…VSGV). The span at 1040–1054 (PFLTIHGDSTSQKVT) shows a compositional bias: polar residues.

Self-associates. Interacts with FSTL3; the interaction enhances MLLT10 in vitro transcriptional activity and self-association. Interacts with YEATS4. Interacts with SS18. Interacts with DOT1L. Interacts with histone H3; interaction is necessary for MLLT10 binding to nucleosomes; interaction is inhibited by histone H3 'Lys-27' methylations (H3K27me1, H3K27me2 and H3K27me3) amd acetylation; interaction stabilizes association of MLLT10 at chromatin; interaction is essential for histone H3 'Lys-79' dimethylation (H3K79me2).

Its subcellular location is the nucleus. In terms of biological role, probably involved in transcriptional regulation. Binds to cruciform DNA. In cells, binding to unmodified histone H3 regulates DOT1L functions including histone H3 'Lys-79' dimethylation (H3K79me2) and gene activation. This is Protein AF-10 from Mus musculus (Mouse).